A 362-amino-acid polypeptide reads, in one-letter code: Anthranilate phosphoribosyltransferase (362 aa).

5-phospho-alpha-D-ribose 1-diphosphate is bound by residues glycine 96, glycine 99 to aspartate 100, threonine 104, asparagine 106 to threonine 109, lysine 124 to serine 132, and glycine 136. Residue glycine 96 participates in anthranilate binding. Serine 108 provides a ligand contact to Mg(2+). Position 127 (asparagine 127) interacts with anthranilate. Arginine 182 contacts anthranilate. Residues aspartate 240 and glutamate 241 each contribute to the Mg(2+) site.

It belongs to the anthranilate phosphoribosyltransferase family. Homodimer. Mg(2+) serves as cofactor.

The enzyme catalyses N-(5-phospho-beta-D-ribosyl)anthranilate + diphosphate = 5-phospho-alpha-D-ribose 1-diphosphate + anthranilate. It participates in amino-acid biosynthesis; L-tryptophan biosynthesis; L-tryptophan from chorismate: step 2/5. Functionally, catalyzes the transfer of the phosphoribosyl group of 5-phosphorylribose-1-pyrophosphate (PRPP) to anthranilate to yield N-(5'-phosphoribosyl)-anthranilate (PRA). The polypeptide is Anthranilate phosphoribosyltransferase (Rhodococcus jostii (strain RHA1)).